Consider the following 23-residue polypeptide: Cysteine-rich venom protein 24 (23 aa).

The segment at 1–23 (VDFASESXNKRENQQIVDKHNAL) is disordered. The segment covering 8–23 (XNKRENQQIVDKHNAL) has biased composition (basic and acidic residues).

It belongs to the CRISP family. Post-translationally, contains 8 disulfide bonds. Expressed by the venom gland.

Its subcellular location is the secreted. This is Cysteine-rich venom protein 24 from Naja kaouthia (Monocled cobra).